Here is a 228-residue protein sequence, read N- to C-terminus: HTH-type transcriptional repressor RspR (228 aa).

Positions 11–78 (QPVNQQIYRI…PQRGSYVNKI (68 aa)) constitute an HTH gntR-type domain. Positions 38–57 (EKEVSVRFNVSRQPVREAFI) form a DNA-binding region, H-T-H motif.

Repressor of the rspAB operon. Acts by binding directly to the upstream region of rspA. This is HTH-type transcriptional repressor RspR (rspR) from Escherichia coli (strain K12).